Consider the following 149-residue polypeptide: Large ribosomal subunit protein bL9 (149 aa).

This sequence belongs to the bacterial ribosomal protein bL9 family.

In terms of biological role, binds to the 23S rRNA. The polypeptide is Large ribosomal subunit protein bL9 (Stenotrophomonas maltophilia (strain K279a)).